The primary structure comprises 413 residues: Multidrug resistance protein MdtA (413 aa).

Residues 1–20 (MKGSNTFRWAIAIGVVVAAA) form the signal peptide. 2 disordered regions span residues 31-57 (SPTA…RDGP) and 391-413 (EPQT…GARA). Residues 397-413 (ADEKSPSRHEGQKGARA) are compositionally biased toward basic and acidic residues.

It belongs to the membrane fusion protein (MFP) (TC 8.A.1) family. As to quaternary structure, part of a tripartite efflux system composed of MdtA, MdtB and MdtC.

It is found in the cell inner membrane. The sequence is that of Multidrug resistance protein MdtA from Salmonella typhimurium (strain LT2 / SGSC1412 / ATCC 700720).